The chain runs to 304 residues: Acetyl-coenzyme A carboxylase carboxyl transferase subunit beta (304 aa).

In terms of domain architecture, CoA carboxyltransferase N-terminal spans 23 to 292 (VWTKCDSCGQ…PNPEAPREGV (270 aa)). Zn(2+) is bound by residues C27, C30, C46, and C49. The segment at 27 to 49 (CDSCGQVLYRAELERNLEVCPKC) adopts a C4-type zinc-finger fold. The tract at residues 284–304 (NPEAPREGVVVPPVPDQEPEA) is disordered. The span at 295 to 304 (PPVPDQEPEA) shows a compositional bias: pro residues.

It belongs to the AccD/PCCB family. As to quaternary structure, acetyl-CoA carboxylase is a heterohexamer composed of biotin carboxyl carrier protein (AccB), biotin carboxylase (AccC) and two subunits each of ACCase subunit alpha (AccA) and ACCase subunit beta (AccD). Zn(2+) is required as a cofactor.

Its subcellular location is the cytoplasm. It carries out the reaction N(6)-carboxybiotinyl-L-lysyl-[protein] + acetyl-CoA = N(6)-biotinyl-L-lysyl-[protein] + malonyl-CoA. The protein operates within lipid metabolism; malonyl-CoA biosynthesis; malonyl-CoA from acetyl-CoA: step 1/1. In terms of biological role, component of the acetyl coenzyme A carboxylase (ACC) complex. Biotin carboxylase (BC) catalyzes the carboxylation of biotin on its carrier protein (BCCP) and then the CO(2) group is transferred by the transcarboxylase to acetyl-CoA to form malonyl-CoA. The polypeptide is Acetyl-coenzyme A carboxylase carboxyl transferase subunit beta (Shigella flexneri).